The primary structure comprises 1004 residues: Polyhomeotic-like protein 1 (1004 aa).

A compositionally biased stretch (low complexity) spans 1-22 (METESEQNSNSTNGSSSSGGSS). 6 disordered regions span residues 1-24 (METE…SSRP), 212-241 (NQQA…SSLS), 261-355 (SLNL…NLTR), 432-512 (QQQQ…QLGA), 556-589 (RGMP…PPTL), and 636-672 (TLAV…SPKV). Positions 212-228 (NQQASAQGPQMQGSTQK) are enriched in polar residues. Residues 279–303 (MGPGGGGQAHGGLGQLPSSGMGGGS) are compositionally biased toward gly residues. Composition is skewed to polar residues over residues 319 to 329 (QTVTVSQGSQT) and 344 to 355 (SGQQNVGMNLTR). Residues 432-447 (QQQQQQQQPQATTLTA) are compositionally biased toward low complexity. Pro residues predominate over residues 448–458 (PQPPQVPPTQQ). Positions 459-482 (VPPSQSQQQAQTLVVQPMLQSSPL) are enriched in low complexity. The span at 483–495 (SLPPDAAPKPPIP) shows a compositional bias: pro residues. Residues 566–583 (QAHLASSPPSSQAPGALQ) are compositionally biased toward low complexity. Serine 645 carries the phosphoserine modification. Residue lysine 763 forms a Glycyl lysine isopeptide (Lys-Gly) (interchain with G-Cter in SUMO2) linkage. Residues 791-825 (LDKKANLLKCEYCGKYAPAEQFRGSKRFCSMTCAK) form an FCS-type zinc finger. Zn(2+) is bound by residues cysteine 800, cysteine 803, cysteine 819, and cysteine 823. A disordered region spans residues 848–928 (ANYARVRRRG…APPTPELHGI (81 aa)). At serine 898 the chain carries Phosphoserine. Position 922 is a phosphothreonine (threonine 922). The SAM domain occupies 940-1004 (WSVEEVYEFI…CAKINVLKET (65 aa)).

Homodimer. Component of a PRC1-like complex. Interacts with RNF2 and CBX7. Interacts with PHC2, PHC2 and BMI1.

Its subcellular location is the nucleus. Component of a Polycomb group (PcG) multiprotein PRC1-like complex, a complex class required to maintain the transcriptionally repressive state of many genes, including Hox genes, throughout development. PcG PRC1 complex acts via chromatin remodeling and modification of histones; it mediates monoubiquitination of histone H2A 'Lys-119', rendering chromatin heritably changed in its expressibility. Required for proper control of cellular levels of GMNN expression. In Homo sapiens (Human), this protein is Polyhomeotic-like protein 1 (PHC1).